A 425-amino-acid chain; its full sequence is Type I restriction enzyme MjaVII specificity subunit (425 aa).

Positions 9-168 (KKTEIGEIPE…KSFKIPLPPL (160 aa)) are target recognition domain 1. A central conserved region (CCR) region spans residues 169–208 (EEQKQIAKILTKIDEGIEIIEKSINKLERIKKGLMHKLLT). The stretch at 169 to 208 (EEQKQIAKILTKIDEGIEIIEKSINKLERIKKGLMHKLLT) forms a coiled coil. Positions 209 to 368 (KGIGHSRFKK…TFKELSKSML (160 aa)) are target recognition domain 2. Residues 369–418 (ENFKIPLPPLEEQKQIAKILSSVDKSIELKKQKKEKLQRMKKKIMELLLT) are a coiled coil. Residues 369-418 (ENFKIPLPPLEEQKQIAKILSSVDKSIELKKQKKEKLQRMKKKIMELLLT) form a distal conserved region (DCR) region.

This sequence belongs to the type-I restriction system S methylase family. In terms of assembly, the type I restriction/modification system is composed of three polypeptides R, M and S.

Its function is as follows. The specificity (S) subunit of a type I restriction enzyme; this subunit dictates DNA sequence specificity. The M and S subunits together form a methyltransferase (MTase) that methylates A-3 on the top and bottom strands of the sequence 5'-CAAN(7)TGG-3'. In the presence of the R subunit the complex can also act as an endonuclease, binding to the same target sequence but cutting the DNA some distance from this site. Whether the DNA is cut or modified depends on the methylation state of the target sequence. When the target site is unmodified, the DNA is cut. When the target site is hemimethylated, the complex acts as a maintenance MTase modifying the DNA so that both strands become methylated. After locating a non-methylated recognition site, the enzyme complex serves as a molecular motor that translocates DNA in an ATP-dependent manner until a collision occurs that triggers cleavage. The sequence is that of Type I restriction enzyme MjaVII specificity subunit from Methanocaldococcus jannaschii (strain ATCC 43067 / DSM 2661 / JAL-1 / JCM 10045 / NBRC 100440) (Methanococcus jannaschii).